The chain runs to 787 residues: Phenylalanine--tRNA ligase beta subunit (787 aa).

The region spanning 38–151 (GQDPAPFVVA…SDYEVGDSFF (114 aa)) is the tRNA-binding domain. Positions 397 to 474 (SEGRVISFNP…RMHGYDKVQE (78 aa)) constitute a B5 domain. Mg(2+) is bound by residues Asp452, Asp458, Glu461, and Glu462. The FDX-ACB domain maps to 694-785 (HKYQPVKRDF…VAQKLGGELR (92 aa)).

The protein belongs to the phenylalanyl-tRNA synthetase beta subunit family. Type 1 subfamily. Tetramer of two alpha and two beta subunits. Mg(2+) serves as cofactor.

It localises to the cytoplasm. The catalysed reaction is tRNA(Phe) + L-phenylalanine + ATP = L-phenylalanyl-tRNA(Phe) + AMP + diphosphate + H(+). The protein is Phenylalanine--tRNA ligase beta subunit of Anaplasma marginale (strain St. Maries).